The chain runs to 520 residues: Succinyl-CoA:3-ketoacid coenzyme A transferase 2A, mitochondrial (520 aa).

A mitochondrion-targeting transit peptide spans 1 to 39 (MAALRLLAWALPRGVSALRPPPALPHRLIRRYVSDRSGS). A disordered region spans residues 280 to 299 (ERLTTRDSKPAPGSKDNDPS). Glu342 acts as the 5-glutamyl coenzyme A thioester intermediate in catalysis.

Belongs to the 3-oxoacid CoA-transferase family. Homodimer.

The protein resides in the mitochondrion. It carries out the reaction a 3-oxo acid + succinyl-CoA = a 3-oxoacyl-CoA + succinate. It participates in ketone metabolism; succinyl-CoA degradation; acetoacetyl-CoA from succinyl-CoA: step 1/1. Functionally, key enzyme for ketone body catabolism. Transfers the CoA moiety from succinate to acetoacetate. Formation of the enzyme-CoA intermediate proceeds via an unstable anhydride species formed between the carboxylate groups of the enzyme and substrate. Probably play and important roles in the energy metabolism of spermatozoa. The polypeptide is Succinyl-CoA:3-ketoacid coenzyme A transferase 2A, mitochondrial (Oxct2a) (Mus musculus (Mouse)).